The sequence spans 345 residues: Phosphoribosylformylglycinamidine cyclo-ligase (345 aa).

The protein belongs to the AIR synthase family.

It localises to the cytoplasm. The catalysed reaction is 2-formamido-N(1)-(5-O-phospho-beta-D-ribosyl)acetamidine + ATP = 5-amino-1-(5-phospho-beta-D-ribosyl)imidazole + ADP + phosphate + H(+). It participates in purine metabolism; IMP biosynthesis via de novo pathway; 5-amino-1-(5-phospho-D-ribosyl)imidazole from N(2)-formyl-N(1)-(5-phospho-D-ribosyl)glycinamide: step 2/2. This Escherichia coli O45:K1 (strain S88 / ExPEC) protein is Phosphoribosylformylglycinamidine cyclo-ligase.